The primary structure comprises 285 residues: Inositol oxygenase (285 aa).

Residues 1–28 (MKVAADPDPSLVSQRDMEPEAAKDKDSF) form a disordered region. Basic and acidic residues predominate over residues 15-28 (RDMEPEAAKDKDSF). Arg-29 contacts substrate. Ser-33 bears the Phosphoserine mark. Substrate is bound at residue 85-87 (DES). Fe cation is bound by residues His-98, His-123, and Asp-124. Substrate contacts are provided by residues Lys-127 and 141–142 (GD). Fe cation-binding residues include His-194, His-220, and Asp-253. Position 220-221 (220-221 (HS)) interacts with substrate.

It belongs to the myo-inositol oxygenase family. Fe cation serves as cofactor.

Its subcellular location is the cytoplasm. The enzyme catalyses myo-inositol + O2 = D-glucuronate + H2O + H(+). It participates in polyol metabolism; myo-inositol degradation into D-glucuronate; D-glucuronate from myo-inositol: step 1/1. The protein is Inositol oxygenase (MIOX) of Bos taurus (Bovine).